We begin with the raw amino-acid sequence, 231 residues long: MASTASEIIAFMVSISGWVLVSSTLPTDYWKVSTIDGTVITTATYWANLWKTCVTDSTGVSNCKDFPSMLALDGYIQACRGLMIAAVSLGFFGSIFALIGMKCTKVGGSDKAKAKIACLAGIVFILSGLCSMTGCSLYANKITTEFFDPLFVEQKYELGAALFIGWAGASLCLIGGVIFCFSISDNNKAPRMGYTYNGATSVMSSRTKYHGREGDLKTPNPSKQFDKNAYV.

The helical transmembrane segment at 1 to 21 threads the bilayer; it reads MASTASEIIAFMVSISGWVLV. The Extracellular portion of the chain corresponds to 22-80; the sequence is SSTLPTDYWKVSTIDGTVITTATYWANLWKTCVTDSTGVSNCKDFPSMLALDGYIQACR. Residues 81 to 101 form a helical membrane-spanning segment; the sequence is GLMIAAVSLGFFGSIFALIGM. Residues 102–115 lie on the Cytoplasmic side of the membrane; the sequence is KCTKVGGSDKAKAK. Residues 116–136 traverse the membrane as a helical segment; sequence IACLAGIVFILSGLCSMTGCS. Residues 137–160 are Extracellular-facing; that stretch reads LYANKITTEFFDPLFVEQKYELGA. Residues 161 to 181 form a helical membrane-spanning segment; the sequence is ALFIGWAGASLCLIGGVIFCF. Topologically, residues 182–231 are cytoplasmic; sequence SISDNNKAPRMGYTYNGATSVMSSRTKYHGREGDLKTPNPSKQFDKNAYV.

Belongs to the claudin family. As to quaternary structure, can form homodimers both in trans (interaction between CLDN10 molecules in opposing membranes) and in cis (interaction between CLDN10 molecules within one membrane). Interacts with CLDN19.

The protein resides in the cell junction. It localises to the tight junction. Its subcellular location is the cell membrane. The enzyme catalyses Na(+)(in) = Na(+)(out). It carries out the reaction Li(+)(in) = Li(+)(out). It catalyses the reaction K(+)(in) = K(+)(out). The catalysed reaction is Rb(+)(in) = Rb(+)(out). The enzyme catalyses Cs(+)(in) = Cs(+)(out). It carries out the reaction NH4(+)(in) = NH4(+)(out). It catalyses the reaction methylamine(out) = methylamine(in). The catalysed reaction is Mg(2+)(in) = Mg(2+)(out). The enzyme catalyses Ca(2+)(in) = Ca(2+)(out). It carries out the reaction Sr(2+)(in) = Sr(2+)(out). It catalyses the reaction chloride(in) = chloride(out). The catalysed reaction is nitrate(in) = nitrate(out). Its function is as follows. Forms paracellular channels: polymerizes in tight junction strands with cation- and anion-selective channels through the strands, conveying epithelial permeability in a process known as paracellular tight junction permeability. In sweat glands and in the thick ascending limb (TAL) of Henle's loop in kidney, it controls paracellular sodium permeability which is essential for proper sweat production and renal function. In renal proximal tubules, it conveys selective chloride over hydrogencarbonate anion permeability which is required for renal chloride reabsorption and salt homeostasis. This is Claudin-10 (CLDN10) from Bos taurus (Bovine).